We begin with the raw amino-acid sequence, 161 residues long: Anaerobic nitrite reductase Hb2 (161 aa).

Positions 8–157 constitute a Globin domain; the sequence is GFSEEQEALV…LVDAIKSEMK (150 aa). A Homodimerization motif is present at residues 41 to 45; the sequence is EIAPS. Residues serine 51, lysine 65, histidine 69, lysine 99, threonine 103, and histidine 104 each contribute to the heme b site. A Homodimerization motif is present at residues 111–123; the sequence is NEHFEVTKFALLE.

The protein belongs to the plant globin family. Homodimer. Heme b is required as a cofactor. In terms of tissue distribution, predominantly expressed in roots, cotyledons, stems and nodules (confined to some cells associated with the nitrogen-fixing Bradyrhizobium symbiont), and, to a lower extent, in flowers, young leaves, pods and seeds.

The protein resides in the cytoplasm. It is found in the nucleus. The catalysed reaction is Fe(III)-heme b-[protein] + nitric oxide + H2O = Fe(II)-heme b-[protein] + nitrite + 2 H(+). In terms of biological role, phytoglobin that reduces nitrite to nitric oxide (NO) under anoxic conditions (e.g. during flooding or in waterlogged soil) and upon root nodulation. Required for general plant development and during nodulation, especially for the onset of symbiosis. Monitors nitric oxide (NO) levels during early phase of the nitrogen-fixing symbiosis and buffers oxygen in functioning nodules. May not function as an oxygen storage or transport protein. Has an unusually high affinity for O(2) through a hexacoordinate heme iron because of a very low dissociation constant. Involved in water stress tolerance. The protein is Anaerobic nitrite reductase Hb2 of Glycine max (Soybean).